A 437-amino-acid chain; its full sequence is Elongation factor 1-alpha (437 aa).

The 226-residue stretch at 4–229 (KPHMNLVVIG…DQLQPPAKPV (226 aa)) folds into the tr-type G domain. A G1 region spans residues 13–20 (GHVDHGKS). 13-20 (GHVDHGKS) provides a ligand contact to GTP. S20 is a binding site for Mg(2+). Positions 69 to 73 (GITID) are G2. Residues 90–93 (DAPG) form a G3 region. GTP contacts are provided by residues 90–94 (DAPGH) and 152–155 (NKMD). A G4 region spans residues 152-155 (NKMD). A G5 region spans residues 193-195 (SAW).

The protein belongs to the TRAFAC class translation factor GTPase superfamily. Classic translation factor GTPase family. EF-Tu/EF-1A subfamily.

It is found in the cytoplasm. It carries out the reaction GTP + H2O = GDP + phosphate + H(+). GTP hydrolase that promotes the GTP-dependent binding of aminoacyl-tRNA to the A-site of ribosomes during protein biosynthesis. The polypeptide is Elongation factor 1-alpha (Aeropyrum pernix (strain ATCC 700893 / DSM 11879 / JCM 9820 / NBRC 100138 / K1)).